The sequence spans 694 residues: PTS system fructose-specific EIIABC component (694 aa).

In terms of domain architecture, PTS EIIA type-2 spans 4 to 149 (PLLSAELFFN…NGLINLIDSF (146 aa)). The active-site Tele-phosphohistidine intermediate; for EIIA activity is the histidine 68. Residue histidine 68 is modified to Phosphohistidine; by HPr. One can recognise a PTS EIIB type-2 domain in the interval 179 to 275 (FVAVTACPTG…PQTVYDQVVK (97 aa)). The Phosphocysteine intermediate; for EIIB activity role is filled by cysteine 185. A Phosphocysteine; by EIIA modification is found at cysteine 185. The 378-residue stretch at 310–687 (IYRAILSGVS…NLLVVRKKTK (378 aa)) folds into the PTS EIIC type-2 domain. The next 10 membrane-spanning stretches (helical) occupy residues 318-338 (VSYM…AFLI), 364-384 (GGLS…FALV), 390-410 (LPGF…IDIV), 422-442 (VSSG…LIIV), 461-481 (ILFI…VINI), 502-522 (LAPL…GGPV), 542-562 (VAMA…AIAA), 576-596 (AAYA…IPFV), 602-622 (IMLA…GAFA), and 655-675 (GVGL…GIII).

It localises to the cell membrane. It carries out the reaction D-fructose(out) + N(pros)-phospho-L-histidyl-[protein] = D-fructose 1-phosphate(in) + L-histidyl-[protein]. Functionally, the phosphoenolpyruvate-dependent sugar phosphotransferase system (sugar PTS), a major carbohydrate active transport system, catalyzes the phosphorylation of incoming sugar substrates concomitantly with their translocation across the cell membrane. This system is involved in fructose transport. The chain is PTS system fructose-specific EIIABC component from Mycoplasma pneumoniae (strain ATCC 29342 / M129 / Subtype 1) (Mycoplasmoides pneumoniae).